The chain runs to 453 residues: tRNA(Ile)-lysidine synthase (453 aa).

Serine 27 to serine 32 provides a ligand contact to ATP.

It belongs to the tRNA(Ile)-lysidine synthase family.

It is found in the cytoplasm. It catalyses the reaction cytidine(34) in tRNA(Ile2) + L-lysine + ATP = lysidine(34) in tRNA(Ile2) + AMP + diphosphate + H(+). Its function is as follows. Ligates lysine onto the cytidine present at position 34 of the AUA codon-specific tRNA(Ile) that contains the anticodon CAU, in an ATP-dependent manner. Cytidine is converted to lysidine, thus changing the amino acid specificity of the tRNA from methionine to isoleucine. This chain is tRNA(Ile)-lysidine synthase, found in Rhizobium meliloti (strain 1021) (Ensifer meliloti).